A 697-amino-acid chain; its full sequence is Elongation factor G (697 aa).

One can recognise a tr-type G domain in the interval 10 to 285 (ERTRNIGIMA…AVVDYLPSPL (276 aa)). GTP is bound by residues 19–26 (AHIDAGKT), 83–87 (DTPGH), and 137–140 (NKMD).

This sequence belongs to the TRAFAC class translation factor GTPase superfamily. Classic translation factor GTPase family. EF-G/EF-2 subfamily.

Its subcellular location is the cytoplasm. Functionally, catalyzes the GTP-dependent ribosomal translocation step during translation elongation. During this step, the ribosome changes from the pre-translocational (PRE) to the post-translocational (POST) state as the newly formed A-site-bound peptidyl-tRNA and P-site-bound deacylated tRNA move to the P and E sites, respectively. Catalyzes the coordinated movement of the two tRNA molecules, the mRNA and conformational changes in the ribosome. The sequence is that of Elongation factor G from Pediococcus pentosaceus (strain ATCC 25745 / CCUG 21536 / LMG 10740 / 183-1w).